Consider the following 1544-residue polypeptide: Protein mahjong (1544 aa).

The disordered stretch occupies residues 1-110 (MSEGSGSENA…AAADRRQATK (110 aa)). A compositionally biased stretch (low complexity) spans 10–35 (AAAAEAAAEAEAATEAALMAEAVAVA). Acidic residues predominate over residues 38–91 (SDEEEQPEAEDMPEQAGDNQEEDAAEQQDGGEPEADEDADADDAMSVENAENES). A phosphoserine mark is found at S565 and S569. In terms of domain architecture, LisH spans 912-944 (NKQQLYQLIFEHLESNGLSQTAQMLQREVGLPL). Disordered stretches follow at residues 946 to 973 (TPTT…SRNR) and 987 to 1059 (GNGD…LAED). The residue at position 955 (S955) is a Phosphoserine. Over residues 961–971 (SLPSGSSSLSR) the composition is skewed to low complexity. Residues 1016–1027 (PNFSSLNTTQTP) show a composition bias toward polar residues. 2 short sequence motifs (DWD box) span residues 1302 to 1309 (VLWDVRSG) and 1338 to 1345 (EVWDLRTF). Disordered stretches follow at residues 1447–1475 (KSER…ENTF) and 1487–1544 (LRNL…SSDD). Composition is skewed to acidic residues over residues 1451 to 1467 (SEEE…EDGS) and 1495 to 1535 (NDDE…DVLE).

Belongs to the VPRBP/DCAF1 family. As to quaternary structure, component of the CUL4-RBX1-DDB1-DCAF1 E3 ubiquitin-protein ligase complex. Interacts with l(2)gl.

It is found in the nucleus. It participates in protein modification; protein ubiquitination. Functionally, probable substrate recognition component of tsome E3 ubiquitin-protein ligase complex. Plays a key role in cell competition via its interaction with l(2)gl. This chain is Protein mahjong (mahj), found in Drosophila melanogaster (Fruit fly).